The chain runs to 542 residues: Cytochrome P450 79B1 (542 aa).

Residues 21–41 (FSNMYLLTTLQAFVAITLVML) traverse the membrane as a helical segment. C478 is a heme binding site.

The protein belongs to the cytochrome P450 family. It depends on heme as a cofactor.

The protein localises to the membrane. In terms of biological role, converts tyrosine to para-hydrophenylacetaldoxime in para-hydroxybenzylglucosinolate biosynthesis. This Sinapis alba (White mustard) protein is Cytochrome P450 79B1 (CYP79B1).